A 200-amino-acid chain; its full sequence is MANIAVQRIKREFKEVLKSEETSKNQIKVDLVDENFTELRGEIAGPPDTPYEGGRYQLEIKIPETYPFNPPKVRFITKIWHPNISSVTGAICLDILKDQWAAAMTLRTVLLSLQALLAAAEPDDPQDAVVANQYKQNPEMFKQTARLWAHVYAGAPVSSPEYTKKIENLCAMGFDRNAVIVALSSKSWDVETATELLLSN.

Position 2 is an N-acetylalanine (A2). A UBC core domain is found at 4-154 (IAVQRIKREF…ARLWAHVYAG (151 aa)). Position 14 is an N6-acetyllysine; alternate (K14). A Glycyl lysine isopeptide (Lys-Gly) (interchain with G-Cter in SUMO); alternate cross-link involves residue K14. K14 is covalently cross-linked (Glycyl lysine isopeptide (Lys-Gly) (interchain with G-Cter in SUMO1); alternate). The active-site Glycyl thioester intermediate is the C92. Residue S159 is modified to Phosphoserine. Residues 160–200 (PEYTKKIENLCAMGFDRNAVIVALSSKSWDVETATELLLSN) enclose the UBA domain.

Belongs to the ubiquitin-conjugating enzyme family. Interacts with RNF138/NARF. Interacts with BRCA1. Post-translationally, sumoylation at Lys-14 impairs catalytic activity.

Its subcellular location is the cytoplasm. It catalyses the reaction S-ubiquitinyl-[E1 ubiquitin-activating enzyme]-L-cysteine + [E2 ubiquitin-conjugating enzyme]-L-cysteine = [E1 ubiquitin-activating enzyme]-L-cysteine + S-ubiquitinyl-[E2 ubiquitin-conjugating enzyme]-L-cysteine.. The protein operates within protein modification; protein ubiquitination. Its function is as follows. Accepts ubiquitin from the E1 complex and catalyzes its covalent attachment to other proteins. In vitro, in the presence or in the absence of BRCA1-BARD1 E3 ubiquitin-protein ligase complex, catalyzes the synthesis of 'Lys-48'-linked polyubiquitin chains. Does not transfer ubiquitin directly to but elongates monoubiquitinated substrate protein. Mediates the selective degradation of short-lived and abnormal proteins, such as the endoplasmic reticulum-associated degradation (ERAD) of misfolded lumenal proteins. Ubiquitinates huntingtin. May mediate foam cell formation by the suppression of apoptosis of lipid-bearing macrophages through ubiquitination and subsequence degradation of p53/TP53. Proposed to be involved in ubiquitination and proteolytic processing of NF-kappa-B; in vitro supports ubiquitination of NFKB1. In Bos taurus (Bovine), this protein is Ubiquitin-conjugating enzyme E2 K (UBE2K).